Reading from the N-terminus, the 314-residue chain is Nodulation protein D 1 (314 aa).

One can recognise an HTH lysR-type domain in the interval 6–63 (LDLNLLVALDALMTERNLTAAARSINLSQPAMSAAVGRLRTYFNDDLFTMVGRELVPT). The H-T-H motif DNA-binding region spans 23-42 (LTAAARSINLSQPAMSAAVG).

This sequence belongs to the LysR transcriptional regulatory family.

NodD regulates the expression of the nodABCFE genes which encode other nodulation proteins. NodD is also a negative regulator of its own expression. Binds flavonoids as inducers. The protein is Nodulation protein D 1 (nodD1) of Rhizobium leguminosarum bv. phaseoli.